Consider the following 403-residue polypeptide: MASQPPPPPKPWETRRIPGAGPGPGPGPTFQSADLGPTLLTRPGQPTLTRVPPPILPRPSQQTGGNNVNTFRPAYSSFSSGYGAYGNAFYGSYSPYSYGYNGLGFNRLRVDDLPPSRFVQQAEESSRGAFQSIESIVHAFASVSMMMDATFSAVYNSFRAVLDVANHFSRLKIHFTKVFSAFALVRTIRYLYRRLQWMMGLRRGSENEDLWAESEGTVACLGAEDQANNSAKSWPIFLFFAVILGGPYLIWKLLSTHSDEVTDSTNWANGEDDHVVARAEYDFAAVSDEEISFRAGDMLNLALKEQQPKVRGWLLASLDGQTTGLIPANYVKILGKRRGRKTVESSTMPKQQQSFTNPTSVKGVTTTNSLEEQEAAFESVFVETNKVAGTPDSTGKNGDKQDL.

Pro residues predominate over residues 1-11; sequence MASQPPPPPKP. Positions 1 to 69 are disordered; sequence MASQPPPPPK…SQQTGGNNVN (69 aa). Residues 1–134 are Peroxisomal matrix-facing; it reads MASQPPPPPK…SSRGAFQSIE (134 aa). Residues 59 to 69 are compositionally biased toward polar residues; the sequence is PSQQTGGNNVN. The chain crosses the membrane as a helical span at residues 135–155; sequence SIVHAFASVSMMMDATFSAVY. Residues 145–233 form a targeting to peroxisomes region; it reads MMMDATFSAV…EDQANNSAKS (89 aa). Topologically, residues 156 to 174 are cytoplasmic; it reads NSFRAVLDVANHFSRLKIH. The helical transmembrane segment at 175 to 192 threads the bilayer; sequence FTKVFSAFALVRTIRYLY. Residues 175–196 form an interaction with PEX19 region; it reads FTKVFSAFALVRTIRYLYRRLQ. Residues 193-233 lie on the Peroxisomal matrix side of the membrane; sequence RRLQWMMGLRRGSENEDLWAESEGTVACLGAEDQANNSAKS. A helical transmembrane segment spans residues 234-254; that stretch reads WPIFLFFAVILGGPYLIWKLL. Residues 255-403 are Cytoplasmic-facing; that stretch reads STHSDEVTDS…TGKNGDKQDL (149 aa). An SH3 domain is found at 272 to 336; the sequence is DDHVVARAEY…PANYVKILGK (65 aa). 2 disordered regions span residues 341 to 364 and 381 to 403; these read KTVE…VKGV and FVET…KQDL. Positions 344–364 are enriched in polar residues; it reads ESSTMPKQQQSFTNPTSVKGV.

Belongs to the peroxin-13 family. As to quaternary structure, interacts (via SH3 domain) with PEX14 (via SH3-binding motif); forming the PEX13-PEX14 docking complex. Interacts with PEX19.

It localises to the peroxisome membrane. Functionally, component of the PEX13-PEX14 docking complex, a translocon channel that specifically mediates the import of peroxisomal cargo proteins bound to PEX5 receptor. The PEX13-PEX14 docking complex forms a large import pore which can be opened to a diameter of about 9 nm. Mechanistically, PEX5 receptor along with cargo proteins associates with the PEX14 subunit of the PEX13-PEX14 docking complex in the cytosol, leading to the insertion of the receptor into the organelle membrane with the concomitant translocation of the cargo into the peroxisome matrix. Involved in the import of PTS1- and PTS2-type containing proteins. This is Peroxisomal membrane protein PEX13 from Rattus norvegicus (Rat).